A 114-amino-acid chain; its full sequence is MHELSIAESIIELLEEHAVTHKFKKVTKIILEIGVLAGIEKSALFFCFDVAAQNSLAEGAELLIEDKLAQGVCQNCHLQVTTTGWYEPCPYCGQLLINITEGEQMKIKSLEVEN.

Histidine 2 provides a ligand contact to Ni(2+). Residues cysteine 73, cysteine 76, cysteine 89, and cysteine 92 each coordinate Zn(2+).

It belongs to the HypA/HybF family.

Functionally, involved in the maturation of [NiFe] hydrogenases. Required for nickel insertion into the metal center of the hydrogenase. This is Hydrogenase maturation factor HypA from Psychromonas ingrahamii (strain DSM 17664 / CCUG 51855 / 37).